The primary structure comprises 455 residues: Kynurenine 3-monooxygenase (455 aa).

The protein belongs to the aromatic-ring hydroxylase family. KMO subfamily. The cofactor is FAD.

The enzyme catalyses L-kynurenine + NADPH + O2 + H(+) = 3-hydroxy-L-kynurenine + NADP(+) + H2O. The protein operates within cofactor biosynthesis; NAD(+) biosynthesis; quinolinate from L-kynurenine: step 1/3. In terms of biological role, catalyzes the hydroxylation of L-kynurenine (L-Kyn) to form 3-hydroxy-L-kynurenine (L-3OHKyn). Required for synthesis of quinolinic acid. This chain is Kynurenine 3-monooxygenase, found in Stenotrophomonas maltophilia (strain K279a).